Reading from the N-terminus, the 388-residue chain is Acetate kinase (388 aa).

Position 7 (Asn7) interacts with Mg(2+). Lys14 serves as a coordination point for ATP. Arg76 contributes to the substrate binding site. Asp133 acts as the Proton donor/acceptor in catalysis. Residues His193 to Gly197, Asp267 to Arg269, and Gly315 to Asn319 contribute to the ATP site. Glu374 serves as a coordination point for Mg(2+).

It belongs to the acetokinase family. In terms of assembly, homodimer. The cofactor is Mg(2+). Mn(2+) serves as cofactor.

The protein localises to the cytoplasm. The catalysed reaction is acetate + ATP = acetyl phosphate + ADP. It participates in metabolic intermediate biosynthesis; acetyl-CoA biosynthesis; acetyl-CoA from acetate: step 1/2. Functionally, catalyzes the formation of acetyl phosphate from acetate and ATP. Can also catalyze the reverse reaction. In Micrococcus luteus (strain ATCC 4698 / DSM 20030 / JCM 1464 / CCM 169 / CCUG 5858 / IAM 1056 / NBRC 3333 / NCIMB 9278 / NCTC 2665 / VKM Ac-2230) (Micrococcus lysodeikticus), this protein is Acetate kinase.